Here is a 460-residue protein sequence, read N- to C-terminus: V-type ATP synthase beta chain (460 aa).

Belongs to the ATPase alpha/beta chains family.

Its function is as follows. Produces ATP from ADP in the presence of a proton gradient across the membrane. The V-type beta chain is a regulatory subunit. This Anaeromyxobacter sp. (strain Fw109-5) protein is V-type ATP synthase beta chain.